The chain runs to 228 residues: Orotidine 5'-phosphate decarboxylase (228 aa).

Substrate contacts are provided by residues Asp-10, Lys-33, 60 to 69 (DLKLYDIPHT), Thr-116, Arg-178, Gln-187, Gly-207, and Arg-208. The active-site Proton donor is Lys-62.

This sequence belongs to the OMP decarboxylase family. Type 1 subfamily. Homodimer.

The enzyme catalyses orotidine 5'-phosphate + H(+) = UMP + CO2. Its pathway is pyrimidine metabolism; UMP biosynthesis via de novo pathway; UMP from orotate: step 2/2. Catalyzes the decarboxylation of orotidine 5'-monophosphate (OMP) to uridine 5'-monophosphate (UMP). The polypeptide is Orotidine 5'-phosphate decarboxylase (Oenococcus oeni (strain ATCC BAA-331 / PSU-1)).